The sequence spans 151 residues: SsrA-binding protein (151 aa).

The protein belongs to the SmpB family.

It is found in the cytoplasm. Functionally, required for rescue of stalled ribosomes mediated by trans-translation. Binds to transfer-messenger RNA (tmRNA), required for stable association of tmRNA with ribosomes. tmRNA and SmpB together mimic tRNA shape, replacing the anticodon stem-loop with SmpB. tmRNA is encoded by the ssrA gene; the 2 termini fold to resemble tRNA(Ala) and it encodes a 'tag peptide', a short internal open reading frame. During trans-translation Ala-aminoacylated tmRNA acts like a tRNA, entering the A-site of stalled ribosomes, displacing the stalled mRNA. The ribosome then switches to translate the ORF on the tmRNA; the nascent peptide is terminated with the 'tag peptide' encoded by the tmRNA and targeted for degradation. The ribosome is freed to recommence translation, which seems to be the essential function of trans-translation. The chain is SsrA-binding protein from Wolinella succinogenes (strain ATCC 29543 / DSM 1740 / CCUG 13145 / JCM 31913 / LMG 7466 / NCTC 11488 / FDC 602W) (Vibrio succinogenes).